The sequence spans 277 residues: Bifunctional protein FolD (277 aa).

NADP(+) contacts are provided by residues 164 to 166 (GRS), S189, and V230.

Belongs to the tetrahydrofolate dehydrogenase/cyclohydrolase family. In terms of assembly, homodimer.

The catalysed reaction is (6R)-5,10-methylene-5,6,7,8-tetrahydrofolate + NADP(+) = (6R)-5,10-methenyltetrahydrofolate + NADPH. It catalyses the reaction (6R)-5,10-methenyltetrahydrofolate + H2O = (6R)-10-formyltetrahydrofolate + H(+). Its pathway is one-carbon metabolism; tetrahydrofolate interconversion. Its function is as follows. Catalyzes the oxidation of 5,10-methylenetetrahydrofolate to 5,10-methenyltetrahydrofolate and then the hydrolysis of 5,10-methenyltetrahydrofolate to 10-formyltetrahydrofolate. In Exiguobacterium sibiricum (strain DSM 17290 / CCUG 55495 / CIP 109462 / JCM 13490 / 255-15), this protein is Bifunctional protein FolD.